Reading from the N-terminus, the 929-residue chain is Protein translocase subunit SecA (929 aa).

Residues glutamine 87, glycine 105–threonine 109, and aspartate 512 each bind ATP. Zn(2+)-binding residues include cysteine 914, cysteine 916, cysteine 925, and histidine 926.

The protein belongs to the SecA family. In terms of assembly, monomer and homodimer. Part of the essential Sec protein translocation apparatus which comprises SecA, SecYEG and auxiliary proteins SecDF-YajC and YidC. Zn(2+) serves as cofactor.

It is found in the cell inner membrane. The protein resides in the cytoplasm. The catalysed reaction is ATP + H2O + cellular proteinSide 1 = ADP + phosphate + cellular proteinSide 2.. Its function is as follows. Part of the Sec protein translocase complex. Interacts with the SecYEG preprotein conducting channel. Has a central role in coupling the hydrolysis of ATP to the transfer of proteins into and across the cell membrane, serving both as a receptor for the preprotein-SecB complex and as an ATP-driven molecular motor driving the stepwise translocation of polypeptide chains across the membrane. The sequence is that of Protein translocase subunit SecA from Psychrobacter arcticus (strain DSM 17307 / VKM B-2377 / 273-4).